A 151-amino-acid chain; its full sequence is Deoxyuridine 5'-triphosphate nucleotidohydrolase (151 aa).

Substrate-binding positions include R70–G72, N83, L87–D89, and M97.

Belongs to the dUTPase family. It depends on Mg(2+) as a cofactor.

The enzyme catalyses dUTP + H2O = dUMP + diphosphate + H(+). Its pathway is pyrimidine metabolism; dUMP biosynthesis; dUMP from dCTP (dUTP route): step 2/2. This enzyme is involved in nucleotide metabolism: it produces dUMP, the immediate precursor of thymidine nucleotides and it decreases the intracellular concentration of dUTP so that uracil cannot be incorporated into DNA. The sequence is that of Deoxyuridine 5'-triphosphate nucleotidohydrolase from Pseudomonas aeruginosa (strain LESB58).